A 298-amino-acid chain; its full sequence is uncharacterized protein (298 aa).

This is an uncharacterized protein from Acanthamoeba polyphaga mimivirus (APMV).